A 415-amino-acid chain; its full sequence is DNA double-strand break repair protein Mre11 (415 aa).

Residues aspartate 10, histidine 12, aspartate 51, and asparagine 86 each coordinate Mn(2+). The Proton donor role is filled by histidine 87. The Mn(2+) site is built by histidine 174, histidine 208, and histidine 210.

This sequence belongs to the MRE11/RAD32 family. In terms of assembly, homodimer. Forms a heterotetramer composed of two Mre11 subunits and two Rad50 subunits. Requires Mn(2+) as cofactor.

Nuclease activity is regulated by Rad50. Part of the Rad50/Mre11 complex, which is involved in the early steps of DNA double-strand break (DSB) repair. The complex may facilitate opening of the processed DNA ends to aid in the recruitment of HerA and NurA. Mre11 binds to DSB ends and has both double-stranded 3'-5' exonuclease activity and single-stranded endonuclease activity. The polypeptide is DNA double-strand break repair protein Mre11 (Pyrococcus abyssi (strain GE5 / Orsay)).